The sequence spans 313 residues: Malate dehydrogenase (313 aa).

NAD(+) contacts are provided by residues Gly-11–Gly-16 and Asp-35. Arg-84 and Arg-90 together coordinate substrate. NAD(+)-binding positions include Asn-97 and Val-120 to Asn-122. Substrate contacts are provided by Asn-122 and Arg-153. Catalysis depends on His-177, which acts as the Proton acceptor.

Belongs to the LDH/MDH superfamily. MDH type 3 family.

The enzyme catalyses (S)-malate + NAD(+) = oxaloacetate + NADH + H(+). Functionally, catalyzes the reversible oxidation of malate to oxaloacetate. The chain is Malate dehydrogenase from Ehrlichia canis (strain Jake).